The primary structure comprises 462 residues: Argininosuccinate lyase (462 aa).

The protein belongs to the lyase 1 family. Argininosuccinate lyase subfamily.

It localises to the cytoplasm. The catalysed reaction is 2-(N(omega)-L-arginino)succinate = fumarate + L-arginine. It participates in amino-acid biosynthesis; L-arginine biosynthesis; L-arginine from L-ornithine and carbamoyl phosphate: step 3/3. In Bacillus cytotoxicus (strain DSM 22905 / CIP 110041 / 391-98 / NVH 391-98), this protein is Argininosuccinate lyase.